The following is a 154-amino-acid chain: 3-hydroxyacyl-[acyl-carrier-protein] dehydratase FabZ (154 aa).

H55 is an active-site residue.

It belongs to the thioester dehydratase family. FabZ subfamily.

It is found in the cytoplasm. It catalyses the reaction a (3R)-hydroxyacyl-[ACP] = a (2E)-enoyl-[ACP] + H2O. Involved in unsaturated fatty acids biosynthesis. Catalyzes the dehydration of short chain beta-hydroxyacyl-ACPs and long chain saturated and unsaturated beta-hydroxyacyl-ACPs. This chain is 3-hydroxyacyl-[acyl-carrier-protein] dehydratase FabZ, found in Oleidesulfovibrio alaskensis (strain ATCC BAA-1058 / DSM 17464 / G20) (Desulfovibrio alaskensis).